We begin with the raw amino-acid sequence, 128 residues long: Aspartate 1-decarboxylase (128 aa).

S25 (schiff-base intermediate with substrate; via pyruvic acid) is an active-site residue. S25 carries the pyruvic acid (Ser) modification. Residue T57 coordinates substrate. The active-site Proton donor is the Y58. Substrate is bound at residue 73–75 (GSA).

It belongs to the PanD family. As to quaternary structure, heterooctamer of four alpha and four beta subunits. It depends on pyruvate as a cofactor. Post-translationally, is synthesized initially as an inactive proenzyme, which is activated by self-cleavage at a specific serine bond to produce a beta-subunit with a hydroxyl group at its C-terminus and an alpha-subunit with a pyruvoyl group at its N-terminus.

The protein localises to the cytoplasm. It carries out the reaction L-aspartate + H(+) = beta-alanine + CO2. The protein operates within cofactor biosynthesis; (R)-pantothenate biosynthesis; beta-alanine from L-aspartate: step 1/1. Its function is as follows. Catalyzes the pyruvoyl-dependent decarboxylation of aspartate to produce beta-alanine. This chain is Aspartate 1-decarboxylase, found in Paraburkholderia phytofirmans (strain DSM 17436 / LMG 22146 / PsJN) (Burkholderia phytofirmans).